The primary structure comprises 117 residues: MVPTMFPPPKVFLCSDTDYLKLQHTIYIHVYICIPMNVSKYVYEQYDTEDDKVMHHSIRVILNEARFPFFFLLFLFFSLELEKKNIKEMEEREKVSCGDRWQVVFRKNNKKSISYYG.

This is an uncharacterized protein from Saccharomyces cerevisiae (strain ATCC 204508 / S288c) (Baker's yeast).